Reading from the N-terminus, the 234-residue chain is Leucyl/phenylalanyl-tRNA--protein transferase (234 aa).

The protein belongs to the L/F-transferase family.

The protein localises to the cytoplasm. It carries out the reaction N-terminal L-lysyl-[protein] + L-leucyl-tRNA(Leu) = N-terminal L-leucyl-L-lysyl-[protein] + tRNA(Leu) + H(+). It catalyses the reaction N-terminal L-arginyl-[protein] + L-leucyl-tRNA(Leu) = N-terminal L-leucyl-L-arginyl-[protein] + tRNA(Leu) + H(+). The enzyme catalyses L-phenylalanyl-tRNA(Phe) + an N-terminal L-alpha-aminoacyl-[protein] = an N-terminal L-phenylalanyl-L-alpha-aminoacyl-[protein] + tRNA(Phe). Its function is as follows. Functions in the N-end rule pathway of protein degradation where it conjugates Leu, Phe and, less efficiently, Met from aminoacyl-tRNAs to the N-termini of proteins containing an N-terminal arginine or lysine. The chain is Leucyl/phenylalanyl-tRNA--protein transferase from Pectobacterium atrosepticum (strain SCRI 1043 / ATCC BAA-672) (Erwinia carotovora subsp. atroseptica).